Here is a 359-residue protein sequence, read N- to C-terminus: DNA integrity scanning protein DisA (359 aa).

Residues 7–146 (DDIFRATLAA…GRRYVLDGSA (140 aa)) enclose the DAC domain. Residues Gly-74, Leu-92, and 105–109 (TRHRT) contribute to the ATP site.

This sequence belongs to the DisA family. Homooctamer. It depends on Mg(2+) as a cofactor.

The enzyme catalyses 2 ATP = 3',3'-c-di-AMP + 2 diphosphate. Participates in a DNA-damage check-point that is active prior to asymmetric division when DNA is damaged. DisA forms globular foci that rapidly scan along the chromosomes during sporulation, searching for lesions. When a lesion is present, DisA pauses at the lesion site. This triggers a cellular response that culminates in a temporary block in sporulation initiation. In terms of biological role, also has diadenylate cyclase activity, catalyzing the condensation of 2 ATP molecules into cyclic di-AMP (c-di-AMP). c-di-AMP acts as a signaling molecule that couples DNA integrity with progression of sporulation. The rise in c-di-AMP level generated by DisA while scanning the chromosome, operates as a positive signal that advances sporulation; upon encountering a lesion, the DisA focus arrests at the damaged site and halts c-di-AMP synthesis. This chain is DNA integrity scanning protein DisA, found in Frankia casuarinae (strain DSM 45818 / CECT 9043 / HFP020203 / CcI3).